Here is a 165-residue protein sequence, read N- to C-terminus: Methylated-DNA--protein-cysteine methyltransferase (165 aa).

Cys126 (nucleophile; methyl group acceptor) is an active-site residue.

Belongs to the MGMT family.

Its subcellular location is the cytoplasm. The enzyme catalyses a 6-O-methyl-2'-deoxyguanosine in DNA + L-cysteinyl-[protein] = S-methyl-L-cysteinyl-[protein] + a 2'-deoxyguanosine in DNA. It carries out the reaction a 4-O-methyl-thymidine in DNA + L-cysteinyl-[protein] = a thymidine in DNA + S-methyl-L-cysteinyl-[protein]. Involved in the cellular defense against the biological effects of O6-methylguanine (O6-MeG) and O4-methylthymine (O4-MeT) in DNA. Repairs the methylated nucleobase in DNA by stoichiometrically transferring the methyl group to a cysteine residue in the enzyme. This is a suicide reaction: the enzyme is irreversibly inactivated. The chain is Methylated-DNA--protein-cysteine methyltransferase from Mycolicibacterium paratuberculosis (strain ATCC BAA-968 / K-10) (Mycobacterium paratuberculosis).